Consider the following 344-residue polypeptide: MIKVGIIGATGYVGVELLRLLLNHSQIEIGAISSVSFDGQELNNIYKNFLGRTNLICTNMNEVIEKSDVIFTALPHGLSEDIAKKIIENNKICIDMGADFRLSNEEEYKYWYGNNFSQPELHKQSTYGLPELNKEKIKNSSLIANPGCYPTSIELALAPLLKNSLIEPNGIICDSKSGTTGSGRSLSLNTHFPEENENFAPYKIGEHRHTPEIEEILSNIANTKVTVTFTPHLLPINRGIISTIYCTPKEKIGLNSIHKIYTSFYENEQFVKVLPLGEIASIKNVRLSNNCHISFHLNHRKDQIIIISAIDNMIKGAAGQAIQNMNIILGFKENEGLNLISPAF.

C148 is a catalytic residue.

The protein belongs to the NAGSA dehydrogenase family. Type 1 subfamily.

The protein resides in the cytoplasm. The enzyme catalyses N-acetyl-L-glutamate 5-semialdehyde + phosphate + NADP(+) = N-acetyl-L-glutamyl 5-phosphate + NADPH + H(+). The protein operates within amino-acid biosynthesis; L-arginine biosynthesis; N(2)-acetyl-L-ornithine from L-glutamate: step 3/4. Catalyzes the NADPH-dependent reduction of N-acetyl-5-glutamyl phosphate to yield N-acetyl-L-glutamate 5-semialdehyde. The chain is N-acetyl-gamma-glutamyl-phosphate reductase from Clostridium botulinum (strain Eklund 17B / Type B).